The following is a 786-amino-acid chain: Endonuclease MutS2 (786 aa).

335-342 serves as a coordination point for ATP; it reads GPNTGGKT. The 76-residue stretch at 711–786 folds into the Smr domain; the sequence is LDLRGERFEN…GLGVTVVELK (76 aa).

This sequence belongs to the DNA mismatch repair MutS family. MutS2 subfamily. As to quaternary structure, homodimer. Binds to stalled ribosomes, contacting rRNA.

Endonuclease that is involved in the suppression of homologous recombination and thus may have a key role in the control of bacterial genetic diversity. Functionally, acts as a ribosome collision sensor, splitting the ribosome into its 2 subunits. Detects stalled/collided 70S ribosomes which it binds and splits by an ATP-hydrolysis driven conformational change. Acts upstream of the ribosome quality control system (RQC), a ribosome-associated complex that mediates the extraction of incompletely synthesized nascent chains from stalled ribosomes and their subsequent degradation. Probably generates substrates for RQC. The polypeptide is Endonuclease MutS2 (Bacillus cytotoxicus (strain DSM 22905 / CIP 110041 / 391-98 / NVH 391-98)).